A 66-amino-acid chain; its full sequence is Alpha-actitoxin-Ms11a-2 (66 aa).

Positions 1–24 (MASKIFFVLAVFLVMSAVLPESFA) are cleaved as a signal peptide. Disulfide bonds link C26-C41, C33-C46, and C40-C61.

The protein resides in the secreted. It localises to the nematocyst. Functionally, alpha-toxins act on postsynaptic membranes, they bind to the nicotinic acetylcholine receptors (nAChR) and thus inhibit them. This toxin competes with alpha-bungarotoxin for binding to orthosteric sites on muscle-type T.carlifornicus (IC(50)=1080 nM) and human alpha-7/CHRNA7 nAChRs (IC(50)=14.13 uM). This chain is Alpha-actitoxin-Ms11a-2, found in Metridium senile (Brown sea anemone).